The sequence spans 150 residues: 3-dehydroquinate dehydratase (150 aa).

The active-site Proton acceptor is Tyr-26. Substrate is bound by residues Asn-77, His-83, and Asp-90. The active-site Proton donor is the His-103. Residues 104-105 (LS) and Arg-114 each bind substrate.

Belongs to the type-II 3-dehydroquinase family. As to quaternary structure, homododecamer.

The enzyme catalyses 3-dehydroquinate = 3-dehydroshikimate + H2O. The protein operates within metabolic intermediate biosynthesis; chorismate biosynthesis; chorismate from D-erythrose 4-phosphate and phosphoenolpyruvate: step 3/7. Functionally, catalyzes a trans-dehydration via an enolate intermediate. The chain is 3-dehydroquinate dehydratase from Erwinia tasmaniensis (strain DSM 17950 / CFBP 7177 / CIP 109463 / NCPPB 4357 / Et1/99).